Consider the following 946-residue polypeptide: Clumping factor A (946 aa).

Positions 1–39 (MNMKKKEKHAIRKKSIGVASVLVGTLIGFGLLSSKEADA) are cleaved as a signal peptide. A YSIRK-G/S signaling motif motif is present at residues 9–20 (HAIRKKSIGVAS). 2 disordered regions span residues 34–199 (SKEA…SNKD) and 528–917 (FNNG…SEDE). Residues 40-542 (SENSVTQSDS…GSGDGIDKPV (503 aa)) form a ligand binding A region region. The span at 47–65 (SDSASNESKSNDSSSVSAA) shows a compositional bias: low complexity. Residues 71-111 (TNVSDTKTSSNTNNGETSVAQNPAQQETTQSALTNATTEET) show a composition bias toward polar residues. Low complexity-rich tracts occupy residues 117 to 131 (ATTA…ATTQ) and 142 to 161 (NQTS…SVNS). Polar residues predominate over residues 162-199 (PQNSTNAENVSTTQDTSTEATPSNNESAPQSTDASNKD). The span at 546–564 (QPDEPGEIEPIPEDSDSDP) shows a compositional bias: acidic residues. Residues 565–597 (GSDSGSDSNSDSGSDSGSDSTSDSGSDSASDSD) show a composition bias toward low complexity. The segment covering 598-874 (SASDSDSASD…DSDSESDSNS (277 aa)) has biased composition (acidic residues). Residues 875–893 (DSESGSNNNVVPPNSPKNG) show a composition bias toward low complexity. The span at 900 to 909 (NEAKDSKEPL) shows a compositional bias: basic and acidic residues. Residues 909 to 913 (LPDTG) carry the LPXTG sorting signal motif. A Pentaglycyl murein peptidoglycan amidated threonine modification is found at T912. Positions 913–946 (GSEDEANTSLIWGLLASIGSLLLFRRKKENKDKK) are cleaved as a propeptide — removed by sortase.

It belongs to the serine-aspartate repeat-containing protein (SDr) family.

The protein localises to the secreted. The protein resides in the cell wall. Functionally, cell surface-associated protein implicated in virulence. Promotes bacterial attachment exclusively to the gamma-chain of human fibrinogen. Induces formation of bacterial clumps. The chain is Clumping factor A (clfA) from Staphylococcus aureus (strain MW2).